The chain runs to 356 residues: Heat-inducible transcription repressor HrcA (356 aa).

The protein belongs to the HrcA family.

Negative regulator of class I heat shock genes (grpE-dnaK-dnaJ and groELS operons). Prevents heat-shock induction of these operons. This Bartonella quintana (strain Toulouse) (Rochalimaea quintana) protein is Heat-inducible transcription repressor HrcA.